We begin with the raw amino-acid sequence, 181 residues long: Protein FAM237A (181 aa).

The first 33 residues, Met1–Cys33, serve as a signal peptide directing secretion. Leu113 carries the leucine amide modification. Positions Gly114 to Lys181 are cleaved as a propeptide — removed in the mature form.

Post-translationally, the active form requires C-terminal amidation and disulfide bond formation. Expressed in the pituitary, testis, and heart and at lower levels in the brain.

Its subcellular location is the secreted. Functionally, may be capable of activating GPR83 via the GNAQ signaling pathway. The protein is Protein FAM237A of Homo sapiens (Human).